We begin with the raw amino-acid sequence, 66 residues long: Large ribosomal subunit protein bL35 (66 aa).

The disordered stretch occupies residues 1–23; that stretch reads MPKMKTHRASAKRFKRTANGGLK.

It belongs to the bacterial ribosomal protein bL35 family.

This chain is Large ribosomal subunit protein bL35, found in Lactobacillus helveticus (strain DPC 4571).